The following is a 313-amino-acid chain: Methylenetetrahydrofolate dehydrogenase [NAD(+)] (313 aa).

Cys-152 is an active-site residue. NAD(+)-binding positions include 187–188 (RS), 210–211 (DI), and 270–272 (FAG).

Belongs to the tetrahydrofolate dehydrogenase/cyclohydrolase family. Homodimer.

It carries out the reaction (6R)-5,10-methylene-5,6,7,8-tetrahydrofolate + NAD(+) = (6R)-5,10-methenyltetrahydrofolate + NADH. It participates in one-carbon metabolism; tetrahydrofolate interconversion. Catalyzes oxidation of cytoplasmic one-carbon units for purine biosynthesis. This Dictyostelium discoideum (Social amoeba) protein is Methylenetetrahydrofolate dehydrogenase [NAD(+)] (thfA).